Here is a 334-residue protein sequence, read N- to C-terminus: Ethanol acetyltransferase 1 (334 aa).

The transit peptide at 1–16 (MFASNVVVLNKRSIRF) directs the protein to the mitochondrion. Active-site charge relay system residues include serine 124, aspartate 148, and histidine 296.

It belongs to the AB hydrolase superfamily.

It is found in the mitochondrion. It carries out the reaction ethanol + acetyl-CoA = ethyl acetate + CoA. The enzyme catalyses acetyl-CoA + H2O = acetate + CoA + H(+). The catalysed reaction is ethyl acetate + H2O = ethanol + acetate + H(+). In terms of biological role, alcohol acetyltransferase that catalyzes the synthesis of ethyl acetate from ethanol and acetyl-CoA. Can also function as a thioesterase by hydrolyzing acetyl-CoA in the absence of ethanol, as well as esterase hydrolyzing ethyl acetate. This chain is Ethanol acetyltransferase 1 (EAT1), found in Hanseniaspora uvarum (Yeast).